Here is a 187-residue protein sequence, read N- to C-terminus: Ribosome-recycling factor (187 aa).

The protein belongs to the RRF family.

The protein resides in the cytoplasm. Responsible for the release of ribosomes from messenger RNA at the termination of protein biosynthesis. May increase the efficiency of translation by recycling ribosomes from one round of translation to another. This is Ribosome-recycling factor from Parabacteroides distasonis (strain ATCC 8503 / DSM 20701 / CIP 104284 / JCM 5825 / NCTC 11152).